Consider the following 300-residue polypeptide: Acetyl-coenzyme A carboxylase carboxyl transferase subunit beta 2 (300 aa).

Residues 26-294 (VWVKCPSCRE…SGAYSSEAVA (269 aa)) enclose the CoA carboxyltransferase N-terminal domain. The Zn(2+) site is built by cysteine 30, cysteine 33, cysteine 49, and cysteine 51. The C4-type zinc-finger motif lies at 30-51 (CPSCRELIYHKQLAERMKVCRC).

It belongs to the AccD/PCCB family. As to quaternary structure, acetyl-CoA carboxylase is a heterohexamer composed of biotin carboxyl carrier protein (AccB), biotin carboxylase (AccC) and two subunits each of ACCase subunit alpha (AccA) and ACCase subunit beta (AccD). Zn(2+) is required as a cofactor.

The protein resides in the cytoplasm. The catalysed reaction is N(6)-carboxybiotinyl-L-lysyl-[protein] + acetyl-CoA = N(6)-biotinyl-L-lysyl-[protein] + malonyl-CoA. Its pathway is lipid metabolism; malonyl-CoA biosynthesis; malonyl-CoA from acetyl-CoA: step 1/1. Component of the acetyl coenzyme A carboxylase (ACC) complex. Biotin carboxylase (BC) catalyzes the carboxylation of biotin on its carrier protein (BCCP) and then the CO(2) group is transferred by the transcarboxylase to acetyl-CoA to form malonyl-CoA. This Roseiflexus castenholzii (strain DSM 13941 / HLO8) protein is Acetyl-coenzyme A carboxylase carboxyl transferase subunit beta 2.